The primary structure comprises 166 residues: NAD(P)H-quinone oxidoreductase subunit I, chloroplastic (166 aa).

4Fe-4S ferredoxin-type domains lie at Gly55–Lys84 and Leu95–Glu124. Residues Cys64, Cys67, Cys70, Cys74, Cys104, Cys107, Cys110, and Cys114 each contribute to the [4Fe-4S] cluster site.

It belongs to the complex I 23 kDa subunit family. As to quaternary structure, NDH is composed of at least 16 different subunits, 5 of which are encoded in the nucleus. Requires [4Fe-4S] cluster as cofactor.

The protein resides in the plastid. It localises to the chloroplast thylakoid membrane. The enzyme catalyses a plastoquinone + NADH + (n+1) H(+)(in) = a plastoquinol + NAD(+) + n H(+)(out). It carries out the reaction a plastoquinone + NADPH + (n+1) H(+)(in) = a plastoquinol + NADP(+) + n H(+)(out). Its function is as follows. NDH shuttles electrons from NAD(P)H:plastoquinone, via FMN and iron-sulfur (Fe-S) centers, to quinones in the photosynthetic chain and possibly in a chloroplast respiratory chain. The immediate electron acceptor for the enzyme in this species is believed to be plastoquinone. Couples the redox reaction to proton translocation, and thus conserves the redox energy in a proton gradient. This chain is NAD(P)H-quinone oxidoreductase subunit I, chloroplastic, found in Enydra sessilis (Smallray swampwort).